The following is a 211-amino-acid chain: Holliday junction branch migration complex subunit RuvA (211 aa).

Residues Met-1 to Lys-63 are domain I. The domain II stretch occupies residues Asp-64 to Ala-142. Residues Val-143–Ala-157 form a flexible linker region. Residues Val-158–Lys-211 form a domain III region.

The protein belongs to the RuvA family. In terms of assembly, homotetramer. Forms an RuvA(8)-RuvB(12)-Holliday junction (HJ) complex. HJ DNA is sandwiched between 2 RuvA tetramers; dsDNA enters through RuvA and exits via RuvB. An RuvB hexamer assembles on each DNA strand where it exits the tetramer. Each RuvB hexamer is contacted by two RuvA subunits (via domain III) on 2 adjacent RuvB subunits; this complex drives branch migration. In the full resolvosome a probable DNA-RuvA(4)-RuvB(12)-RuvC(2) complex forms which resolves the HJ.

Its subcellular location is the cytoplasm. Its function is as follows. The RuvA-RuvB-RuvC complex processes Holliday junction (HJ) DNA during genetic recombination and DNA repair, while the RuvA-RuvB complex plays an important role in the rescue of blocked DNA replication forks via replication fork reversal (RFR). RuvA specifically binds to HJ cruciform DNA, conferring on it an open structure. The RuvB hexamer acts as an ATP-dependent pump, pulling dsDNA into and through the RuvAB complex. HJ branch migration allows RuvC to scan DNA until it finds its consensus sequence, where it cleaves and resolves the cruciform DNA. This Corynebacterium jeikeium (strain K411) protein is Holliday junction branch migration complex subunit RuvA.